The sequence spans 601 residues: Bifunctional protein GlmU (601 aa).

The interval 1-375 is pyrophosphorylase; it reads MKSDLAIVIL…SELLLGVNNR (375 aa). Residues 10-13, Lys24, Gln75, and 81-82 contribute to the UDP-N-acetyl-alpha-D-glucosamine site; these read LAAG and GT. Asp165 lines the Mg(2+) pocket. Positions 201, 216, 230, and 373 each coordinate UDP-N-acetyl-alpha-D-glucosamine. Residue Asn373 coordinates Mg(2+). Residues 376-396 are linker; that stretch reads VQLAKTEKILNDQIIKRWQLY. The interval 397-601 is N-acetyltransferase; sequence GVTIKSPETT…PKWAENRGDG (205 aa). Arg478 and Lys496 together coordinate UDP-N-acetyl-alpha-D-glucosamine. The active-site Proton acceptor is His508. UDP-N-acetyl-alpha-D-glucosamine is bound by residues Tyr511 and Asn522. Residues Ala525, 531 to 532, and Ala568 each bind acetyl-CoA; that span reads NY.

It in the N-terminal section; belongs to the N-acetylglucosamine-1-phosphate uridyltransferase family. This sequence in the C-terminal section; belongs to the transferase hexapeptide repeat family. Homotrimer. Requires Mg(2+) as cofactor.

Its subcellular location is the cytoplasm. It catalyses the reaction alpha-D-glucosamine 1-phosphate + acetyl-CoA = N-acetyl-alpha-D-glucosamine 1-phosphate + CoA + H(+). The catalysed reaction is N-acetyl-alpha-D-glucosamine 1-phosphate + UTP + H(+) = UDP-N-acetyl-alpha-D-glucosamine + diphosphate. It functions in the pathway nucleotide-sugar biosynthesis; UDP-N-acetyl-alpha-D-glucosamine biosynthesis; N-acetyl-alpha-D-glucosamine 1-phosphate from alpha-D-glucosamine 6-phosphate (route II): step 2/2. Its pathway is nucleotide-sugar biosynthesis; UDP-N-acetyl-alpha-D-glucosamine biosynthesis; UDP-N-acetyl-alpha-D-glucosamine from N-acetyl-alpha-D-glucosamine 1-phosphate: step 1/1. It participates in bacterial outer membrane biogenesis; LPS lipid A biosynthesis. Catalyzes the last two sequential reactions in the de novo biosynthetic pathway for UDP-N-acetylglucosamine (UDP-GlcNAc). The C-terminal domain catalyzes the transfer of acetyl group from acetyl coenzyme A to glucosamine-1-phosphate (GlcN-1-P) to produce N-acetylglucosamine-1-phosphate (GlcNAc-1-P), which is converted into UDP-GlcNAc by the transfer of uridine 5-monophosphate (from uridine 5-triphosphate), a reaction catalyzed by the N-terminal domain. In Tropheryma whipplei (strain TW08/27) (Whipple's bacillus), this protein is Bifunctional protein GlmU.